A 205-amino-acid chain; its full sequence is Thymidylate kinase (205 aa).

10–17 (GLEGAGKS) provides a ligand contact to ATP.

The protein belongs to the thymidylate kinase family.

The catalysed reaction is dTMP + ATP = dTDP + ADP. In terms of biological role, phosphorylation of dTMP to form dTDP in both de novo and salvage pathways of dTTP synthesis. In Idiomarina loihiensis (strain ATCC BAA-735 / DSM 15497 / L2-TR), this protein is Thymidylate kinase.